Reading from the N-terminus, the 285-residue chain is 2-dehydro-3-deoxyphosphooctonate aldolase (285 aa).

This sequence belongs to the KdsA family.

The protein localises to the cytoplasm. It carries out the reaction D-arabinose 5-phosphate + phosphoenolpyruvate + H2O = 3-deoxy-alpha-D-manno-2-octulosonate-8-phosphate + phosphate. It functions in the pathway carbohydrate biosynthesis; 3-deoxy-D-manno-octulosonate biosynthesis; 3-deoxy-D-manno-octulosonate from D-ribulose 5-phosphate: step 2/3. The protein operates within bacterial outer membrane biogenesis; lipopolysaccharide biosynthesis. This is 2-dehydro-3-deoxyphosphooctonate aldolase from Paracidovorax citrulli (strain AAC00-1) (Acidovorax citrulli).